A 1239-amino-acid polypeptide reads, in one-letter code: Protein strawberry notch homolog 1 (1239 aa).

A disordered region spans residues alanine 684 to phenylalanine 837. Residues serine 694–alanine 713 show a composition bias toward basic and acidic residues. Over residues aspartate 728–asparagine 744 the composition is skewed to acidic residues. Basic residues predominate over residues lysine 778–lysine 790. Residues phenylalanine 814–phenylalanine 837 are compositionally biased toward low complexity. Residues valine 838–proline 866 adopt a coiled-coil conformation.

The protein belongs to the SBNO family.

Its subcellular location is the nucleus. Functionally, plays a crucial role in the regulation of neural stem cells (NSCs) proliferation. Enhances the phosphorylation of GSK3B through the PI3K-Akt signaling pathway, thereby upregulating the Wnt/beta-catenin signaling pathway and promoting the proliferation of NSCs. This Gallus gallus (Chicken) protein is Protein strawberry notch homolog 1 (SBNO1).